Here is a 343-residue protein sequence, read N- to C-terminus: Flavonoid 4'-O-methyltransferase 4 (343 aa).

Residue Asp211 coordinates S-adenosyl-L-methionine. The active-site Proton acceptor is His249.

Belongs to the class I-like SAM-binding methyltransferase superfamily. Cation-independent O-methyltransferase family. In terms of assembly, homodimer.

The catalysed reaction is apigenin + S-adenosyl-L-methionine = acacetin + S-adenosyl-L-homocysteine + H(+). It carries out the reaction kaempferol + S-adenosyl-L-methionine = kaempferide + S-adenosyl-L-homocysteine + H(+). It catalyses the reaction isorhamnetin + S-adenosyl-L-methionine = 3',4'-O-dimethylquercetin + S-adenosyl-L-homocysteine + 2 H(+). The enzyme catalyses scutellarein + S-adenosyl-L-methionine = scutellarein 4'-methyl ether + S-adenosyl-L-homocysteine + H(+). The catalysed reaction is (2S)-naringenin + S-adenosyl-L-methionine = (2S)-naringenin 4'-methyl ether + S-adenosyl-L-homocysteine + H(+). It carries out the reaction 4',7,8-trihydroxyflavone + S-adenosyl-L-methionine = 7,8-dihydroxy-4'-methoxyflavone + S-adenosyl-L-homocysteine + H(+). It catalyses the reaction taxifolin + S-adenosyl-L-methionine = taxifolin 4'-methyl ether + S-adenosyl-L-homocysteine + H(+). It functions in the pathway flavonoid metabolism. Flavonoid 4'-O-methyltransferase involved in the biosynthesis of polymethoxylated flavonoids natural products such as pebrellin, aroma compounds which contribute to the flavor of peppermint, and exhibit pharmacological activities such as anti-allergic, anti-oxidant, antibacterial, anti-proliferative, and anti-inflammatory effects. Catalyzes S-adenosylmethionine-dependent regioselective 4'-O-methylation of flavonoids; active on various hydroxylated flavonoid substrates, including isorhamnetin, kaempferol, apigenin (API), scutellarein (6-hydroxy-apigenin, 6-OH-API, SCU), taxifolin, 7,8,4'-trihydroxy-flavone and naringenin (NAR), and, with a lower efficiency, quercetin, rhamnetin, luteolin (LUT) and 7,8,3',4'-tetrahydroxy-flavone. In Mentha piperita (Peppermint), this protein is Flavonoid 4'-O-methyltransferase 4.